Here is a 214-residue protein sequence, read N- to C-terminus: Pyridoxine/pyridoxamine 5'-phosphate oxidase (214 aa).

Substrate contacts are provided by residues 9-12 and lysine 67; that span reads RREY. Residues 62 to 67, 77 to 78, arginine 83, lysine 84, and glutamine 106 each bind FMN; these read RTVLLK and YS. Residues tyrosine 124, arginine 128, and serine 132 each contribute to the substrate site. FMN-binding positions include 141-142 and tryptophan 186; that span reads QS. 192–194 contributes to the substrate binding site; the sequence is RLH. An FMN-binding site is contributed by arginine 196.

The protein belongs to the pyridoxamine 5'-phosphate oxidase family. In terms of assembly, homodimer. The cofactor is FMN.

It carries out the reaction pyridoxamine 5'-phosphate + O2 + H2O = pyridoxal 5'-phosphate + H2O2 + NH4(+). The enzyme catalyses pyridoxine 5'-phosphate + O2 = pyridoxal 5'-phosphate + H2O2. Its pathway is cofactor metabolism; pyridoxal 5'-phosphate salvage; pyridoxal 5'-phosphate from pyridoxamine 5'-phosphate: step 1/1. The protein operates within cofactor metabolism; pyridoxal 5'-phosphate salvage; pyridoxal 5'-phosphate from pyridoxine 5'-phosphate: step 1/1. In terms of biological role, catalyzes the oxidation of either pyridoxine 5'-phosphate (PNP) or pyridoxamine 5'-phosphate (PMP) into pyridoxal 5'-phosphate (PLP). The chain is Pyridoxine/pyridoxamine 5'-phosphate oxidase from Porphyromonas gingivalis (strain ATCC BAA-308 / W83).